A 153-amino-acid polypeptide reads, in one-letter code: Proline-rich membrane anchor 1 (153 aa).

The signal sequence occupies residues 1–35 (MLLRDLVLRRGCCWSSLLLHCALHPLWGFVQVTHG). The Extracellular portion of the chain corresponds to 36–92 (EPQKSCSKVTDSCRHVCQCRPPPPLPPPPPPPPPPRLLSAPAPNSTSCPTEESWWSG). Residues 56-70 (PPPPLPPPPPPPPPP) enclose the PRAD domain. Over residues 59–71 (PLPPPPPPPPPPR) the composition is skewed to pro residues. The disordered stretch occupies residues 59-79 (PLPPPPPPPPPPRLLSAPAPN). The N-linked (GlcNAc...) asparagine glycan is linked to Asn-79. Residues 93 to 113 (LVIIIAVCCASLVFLTVLVII) traverse the membrane as a helical segment. Residues 114–153 (CYKAIKRKPLRKDENGTSVAEYPMSASQSNKGVDVNNAVV) lie on the Cytoplasmic side of the membrane.

In terms of assembly, interacts with ACHE, probably through disulfide bonds.

The protein resides in the cell membrane. It is found in the cell junction. It localises to the synapse. Functionally, required to anchor acetylcholinesterase (ACHE) to the basal lamina of the neuromuscular junction and to the membrane of neuronal synapses in brain. Also able to organize ACHE into tetramers. The polypeptide is Proline-rich membrane anchor 1 (PRIMA1) (Homo sapiens (Human)).